The primary structure comprises 461 residues: Cysteine--tRNA ligase (461 aa).

C28 is a binding site for Zn(2+). Residues 30-40 carry the 'HIGH' region motif; that stretch reads ITVYDLCHIGH. Positions 209, 234, and 238 each coordinate Zn(2+). Residues 266–270 carry the 'KMSKS' region motif; sequence KMSKS. K269 is a binding site for ATP.

The protein belongs to the class-I aminoacyl-tRNA synthetase family. Monomer. The cofactor is Zn(2+).

The protein localises to the cytoplasm. It carries out the reaction tRNA(Cys) + L-cysteine + ATP = L-cysteinyl-tRNA(Cys) + AMP + diphosphate. This Salmonella agona (strain SL483) protein is Cysteine--tRNA ligase.